A 312-amino-acid chain; its full sequence is Malate dehydrogenase (312 aa).

Residues 7–13 (GAAGGIG) and Asp-34 each bind NAD(+). The substrate site is built by Arg-81 and Arg-87. NAD(+) is bound by residues Asn-94 and 117-119 (ITN). Residues Asn-119 and Arg-153 each coordinate substrate. The active-site Proton acceptor is His-177. Met-227 provides a ligand contact to NAD(+).

The protein belongs to the LDH/MDH superfamily. MDH type 1 family. Homodimer.

It catalyses the reaction (S)-malate + NAD(+) = oxaloacetate + NADH + H(+). Its function is as follows. Catalyzes the reversible oxidation of malate to oxaloacetate. The chain is Malate dehydrogenase from Pectobacterium carotovorum subsp. carotovorum (strain PC1).